The following is a 951-amino-acid chain: Leucine-rich repeat-containing G-protein coupled receptor 4 (951 aa).

The first 24 residues, 1 to 24 (MPGPLRLLCFFALGLLGSAGPSGA), serve as a signal peptide directing secretion. The 33-residue stretch at 25 to 57 (APPLCAAPCSCDGDRRVDCSGKGLTAVPEGLSA) folds into the LRRNT domain. At 25 to 544 (APPLCAAPCS…LLGSWMIRLT (520 aa)) the chain is on the extracellular side. Disulfide bonds link cysteine 29-cysteine 35 and cysteine 33-cysteine 43. LRR repeat units follow at residues 58-79 (FTQALDISMNNITQLPEDAFKS), 82-103 (FLEELQLAGNDLSFIHPKALSG), 106-127 (ELKVLTLQNNQLRTVPSEAIHG), 130-151 (ALQSLRLDANHITSVPEDSFEG), 154-177 (QLRHLWLDDNSLTEVPVRPLSNLP), 178-199 (TLQALTLALNNISSIPDFAFTN), 202-223 (SLVVLHLHNNKIKSLSQHCFDG), 226-247 (NLETLDLNYNNLDEFPQAIKAL), 249-270 (SLKELGFHSNSISVIPDGAFGG), and 273-294 (LLRTIHLYDNPLSFVGNSAFHN). The N-linked (GlcNAc...) asparagine glycan is linked to asparagine 68. 2 N-linked (GlcNAc...) asparagine glycosylation sites follow: asparagine 188 and asparagine 199. Asparagine 294 and asparagine 314 each carry an N-linked (GlcNAc...) asparagine glycan. 5 LRR repeats span residues 320–341 (HLESLTLTGTKISSIPDDLCQN), 344–365 (MLRTLDLSYNNIRDLPSFNGCR), 366–387 (ALEEISLQRNQISLIKENTFQG), 390–411 (SLRILDLSRNLIREIHSGAFAK), and 414–435 (TITNLDVSFNELTSFPTEGLNG). A disulfide bridge connects residues cysteine 339 and cysteine 364. 2 disulfide bridges follow: cysteine 470–cysteine 522 and cysteine 471–cysteine 476. An N-linked (GlcNAc...) asparagine glycan is attached at asparagine 505. Residues 545-565 (VWFIFLVALLFNLLVILTVFA) traverse the membrane as a helical segment. The Cytoplasmic segment spans residues 566 to 575 (SCSSLPASKL). A helical transmembrane segment spans residues 576 to 596 (FIGLISVSNLLMGIYTGILTF). The Extracellular portion of the chain corresponds to 597–619 (LDAVSWGRFAEFGIWWETGSGCK). Residues cysteine 618 and cysteine 693 are joined by a disulfide bond. A helical membrane pass occupies residues 620–640 (VAGSLAVFSSESAVFLLTLAA). The Cytoplasmic segment spans residues 641 to 661 (VERSVFAKDLMKHGKSSHLRQ). A helical membrane pass occupies residues 662–682 (FQVAALLALLGAAVAGCFPLF). The Extracellular portion of the chain corresponds to 683–703 (HGGQYSASPLCLPFPTGETPS). A helical membrane pass occupies residues 704–724 (LGFTVTLVLLNSLAFLLMAII). The Cytoplasmic portion of the chain corresponds to 725–756 (YTKLYCNLEKEDLSENSQSSVIKHVAWLIFTN). Residues 757–777 (CIFFCPVAFFSFAPLITAISI) traverse the membrane as a helical segment. Residues 778 to 783 (SPEIMK) lie on the Extracellular side of the membrane. The helical transmembrane segment at 784-804 (SVTLIFFPLPACLNPVLYVFF) threads the bilayer. Over 805 to 951 (NPKFKEDWKL…YAYNLQRVRD (147 aa)) the chain is Cytoplasmic. Residue serine 920 is modified to Phosphoserine.

It belongs to the G-protein coupled receptor 1 family.

The protein localises to the cell membrane. Receptor for R-spondins that potentiates the canonical Wnt signaling pathway and is involved in the formation of various organs. Upon binding to R-spondins (RSPO1, RSPO2, RSPO3 or RSPO4), associates with phosphorylated LRP6 and frizzled receptors that are activated by extracellular Wnt receptors, triggering the canonical Wnt signaling pathway to increase expression of target genes. In contrast to classical G-protein coupled receptors, does not activate heterotrimeric G-proteins to transduce the signal. Its function as activator of the Wnt signaling pathway is required for the development of various organs, including liver, kidney, intestine, bone, reproductive tract and eye. May also act as a receptor for norrin (NDP), such results however require additional confirmation in vivo. Required during spermatogenesis to activate the Wnt signaling pathway in peritubular myoid cells. Required for the maintenance of intestinal stem cells and Paneth cell differentiation in postnatal intestinal crypts. Acts as a regulator of bone formation and remodeling. Involved in kidney development; required for maintaining the ureteric bud in an undifferentiated state. Involved in the development of the anterior segment of the eye. Required during erythropoiesis. Also acts as a negative regulator of innate immunity by inhibiting TLR2/TLR4 associated pattern-recognition and pro-inflammatory cytokine production. Plays an important role in regulating the circadian rhythms of plasma lipids, partially through regulating the rhythmic expression of MTTP. Required for proper development of GnRH neurons (gonadotropin-releasing hormone expressing neurons) that control the release of reproductive hormones from the pituitary gland. The polypeptide is Leucine-rich repeat-containing G-protein coupled receptor 4 (Lgr4) (Rattus norvegicus (Rat)).